The sequence spans 54 residues: Salt stress-induced hydrophobic peptide ESI3 (54 aa).

The next 2 helical transmembrane spans lie at 2-22 and 34-54; these read GSAT…GVFL and LLLT…VLVV.

Belongs to the UPF0057 (PMP3) family.

The protein resides in the membrane. The chain is Salt stress-induced hydrophobic peptide ESI3 (ESI3) from Thinopyrum elongatum (Tall wheatgrass).